The chain runs to 414 residues: Lactosylceramide alpha-2,3-sialyltransferase (414 aa).

The Cytoplasmic segment spans residues 1–65; that stretch reads MHTEAVGGAA…MRRPSLLIKD (65 aa). Residues 66 to 86 traverse the membrane as a helical; Signal-anchor for type II membrane protein segment; sequence ICKCTLVAFGVWLLYILILNY. The Lumenal portion of the chain corresponds to 87–414; the sequence is TAEECDMKRM…VVEDLSGGIH (328 aa). Residues C194 and C352 are joined by a disulfide bond. N-linked (GlcNAc...) asparagine glycosylation is found at N235, N279, and N389.

It belongs to the glycosyltransferase 29 family. Mainly expressed in brain, and then testis, heart and liver, almost all tissues showed some levels of the gene expression.

The protein localises to the golgi apparatus membrane. It carries out the reaction a beta-D-Gal-(1-&gt;4)-beta-D-Glc-(1&lt;-&gt;1)-Cer(d18:1(4E)) + CMP-N-acetyl-beta-neuraminate = a ganglioside GM3 (d18:1(4E)) + CMP + H(+). The enzyme catalyses ganglioside GA2 (d18:1(4E)/18:0) + CMP-N-acetyl-beta-neuraminate = ganglioside GM2 (d18:1(4E)/18:0) + CMP + H(+). The catalysed reaction is a beta-D-Gal-(1&lt;-&gt;1')-ceramide + CMP-N-acetyl-beta-neuraminate = N-acetyl-alpha-neuraminosyl-(2-&gt;3)-beta-D-galactosyl-(1&lt;-&gt;1')-ceramide + CMP + H(+). It catalyses the reaction ganglioside GA1 (d18:1(4E)/18:0) + CMP-N-acetyl-beta-neuraminate = ganglioside GM1 (d18:1(4E)/18:0) + CMP + H(+). Functionally, (Microbial infection) Gangliosides GD1b and GT1b (derived from GM3) may serve as receptors for some C.botulinum neurotoxins (minimally types BoNT/A, B, C). Its function is as follows. Transfers the sialyl group (N-acetyl-alpha-neuraminyl or NeuAc) from CMP-NeuAc to the non-reducing terminal galactose (Gal) of glycosphingolipids forming gangliosides (important molecules involved in the regulation of multiple cellular processes, including cell proliferation and differentiation, apoptosis, embryogenesis, development, and oncogenesis). Mainly involved in the biosynthesis of ganglioside GM3 but can also use different glycolipids as substrate acceptors such as D-galactosylceramide (GalCer), asialo-GM2 (GA2) and asialo-GM1 (GA1), although less preferentially than beta-D-Gal-(1-&gt;4)-beta-D-Glc-(1&lt;-&gt;1)-Cer (LacCer). This is Lactosylceramide alpha-2,3-sialyltransferase (St3gal5) from Mus musculus (Mouse).